Reading from the N-terminus, the 242-residue chain is DNA repair protein RecO (242 aa).

The protein belongs to the RecO family.

Involved in DNA repair and RecF pathway recombination. The polypeptide is DNA repair protein RecO (Xanthobacter autotrophicus (strain ATCC BAA-1158 / Py2)).